Here is a 312-residue protein sequence, read N- to C-terminus: Olfactory receptor 51B6 (312 aa).

Over M1 to H23 the chain is Extracellular. An N-linked (GlcNAc...) asparagine glycan is attached at N4. The helical transmembrane segment at W24 to L44 threads the bilayer. The Cytoplasmic portion of the chain corresponds to F45 to N52. The helical transmembrane segment at L53–L73 threads the bilayer. Over T74–S97 the chain is Extracellular. A disulfide bond links C95 and C187. The chain crosses the membrane as a helical span at residues Q98–Y118. Over D119–T137 the chain is Cytoplasmic. Residues Q138–V158 form a helical membrane-spanning segment. Over V159–R194 the chain is Extracellular. A helical membrane pass occupies residues L195 to S215. Over Y216–A235 the chain is Cytoplasmic. Residues L236 to L256 traverse the membrane as a helical segment. Residues T257–H271 are Extracellular-facing. A helical membrane pass occupies residues I272 to I292. The Cytoplasmic portion of the chain corresponds to K293–A312.

It belongs to the G-protein coupled receptor 1 family.

Its subcellular location is the cell membrane. Functionally, odorant receptor. This Homo sapiens (Human) protein is Olfactory receptor 51B6 (OR51B6).